Consider the following 333-residue polypeptide: Protoheme IX farnesyltransferase (333 aa).

7 consecutive transmembrane segments (helical) span residues 64–84, 110–130, 133–153, 161–181, 189–209, 246–266, and 287–307; these read LICT…LNCL, TVFL…VSGV, LAAG…TVIL, IVFG…AATG, WLFG…AILL, IMGV…LLPF, and AKSL…LLLI.

The protein belongs to the UbiA prenyltransferase family. Protoheme IX farnesyltransferase subfamily.

The protein localises to the cell inner membrane. It catalyses the reaction heme b + (2E,6E)-farnesyl diphosphate + H2O = Fe(II)-heme o + diphosphate. It functions in the pathway porphyrin-containing compound metabolism; heme O biosynthesis; heme O from protoheme: step 1/1. Converts heme B (protoheme IX) to heme O by substitution of the vinyl group on carbon 2 of heme B porphyrin ring with a hydroxyethyl farnesyl side group. This Prochlorococcus marinus (strain MIT 9215) protein is Protoheme IX farnesyltransferase.